A 103-amino-acid chain; its full sequence is Large ribosomal subunit protein uL24 (103 aa).

This sequence belongs to the universal ribosomal protein uL24 family. Part of the 50S ribosomal subunit.

Its function is as follows. One of two assembly initiator proteins, it binds directly to the 5'-end of the 23S rRNA, where it nucleates assembly of the 50S subunit. Functionally, one of the proteins that surrounds the polypeptide exit tunnel on the outside of the subunit. The sequence is that of Large ribosomal subunit protein uL24 from Sinorhizobium fredii (strain NBRC 101917 / NGR234).